Reading from the N-terminus, the 237-residue chain is Probable S-methyl-5'-thioinosine phosphorylase (237 aa).

Phosphate-binding positions include Thr12 and 54 to 55; that span reads RH. Residue Met187 participates in substrate binding. Position 188 (Thr188) interacts with phosphate. 211-213 contributes to the substrate binding site; the sequence is NWA.

It belongs to the PNP/MTAP phosphorylase family. MTAP subfamily. In terms of assembly, homotrimer.

The enzyme catalyses S-methyl-5'-thioinosine + phosphate = 5-(methylsulfanyl)-alpha-D-ribose 1-phosphate + hypoxanthine. Its pathway is purine metabolism; purine nucleoside salvage. Its function is as follows. Catalyzes the reversible phosphorylation of S-methyl-5'-thioinosine (MTI) to hypoxanthine and 5-methylthioribose-1-phosphate. Involved in the breakdown of S-methyl-5'-thioadenosine (MTA), a major by-product of polyamine biosynthesis. Catabolism of (MTA) occurs via deamination to MTI and phosphorolysis to hypoxanthine. This Xylella fastidiosa (strain 9a5c) protein is Probable S-methyl-5'-thioinosine phosphorylase.